Here is a 165-residue protein sequence, read N- to C-terminus: UPF0303 protein Bxeno_A1932 (165 aa).

Belongs to the UPF0303 family.

The protein is UPF0303 protein Bxeno_A1932 of Paraburkholderia xenovorans (strain LB400).